The following is a 409-amino-acid chain: MFQRWSFALCRPIVAAAQVSQQQVPPSEEPRNESGAANPPLVKEEFLRQFRERLANDKTGRNSLEGFLDLPENLPPTAASIGPLKRGKEPLPPWLKLKVPMGASRQPRFNKIRRNMREKRLATVCEEAKCPNIGECWGGGDEEGDGTATATIMVMGAHCTRGCRFCSVMTSRTPPPLDPEEPRKTADAVADMGVEYIVMTMVDRDDLADGGAAHVVRCVTAVKERNPGLLLEALVGDFHGDLKLVEMVAGSPLNVYAHNIECVERITPNVRDRRASYRQSLKVLEHVNNFTKGAMLTKSSIMLGLGEKEEEVRQTLRDLRTAGVSAVTLGQYLQPSRTRLKVSRYAHPKEFEMWEKEALDMGFLYCASGPMVRSSYRAGEYYIKNILKQRETVEAPSVSDGGNEPKDSE.

Positions 21–41 are disordered; it reads QQQVPPSEEPRNESGAANPPL. Residues cysteine 125, cysteine 130, cysteine 136, cysteine 159, cysteine 163, cysteine 166, and serine 375 each coordinate [4Fe-4S] cluster. Residues 142 to 364 form the Radical SAM core domain; that stretch reads EEGDGTATAT…EKEALDMGFL (223 aa).

Belongs to the radical SAM superfamily. Lipoyl synthase family. The cofactor is [4Fe-4S] cluster.

The protein resides in the mitochondrion. It carries out the reaction [[Fe-S] cluster scaffold protein carrying a second [4Fe-4S](2+) cluster] + N(6)-octanoyl-L-lysyl-[protein] + 2 oxidized [2Fe-2S]-[ferredoxin] + 2 S-adenosyl-L-methionine + 4 H(+) = [[Fe-S] cluster scaffold protein] + N(6)-[(R)-dihydrolipoyl]-L-lysyl-[protein] + 4 Fe(3+) + 2 hydrogen sulfide + 2 5'-deoxyadenosine + 2 L-methionine + 2 reduced [2Fe-2S]-[ferredoxin]. The protein operates within protein modification; protein lipoylation via endogenous pathway; protein N(6)-(lipoyl)lysine from octanoyl-[acyl-carrier-protein]: step 2/2. Its function is as follows. Catalyzes the radical-mediated insertion of two sulfur atoms into the C-6 and C-8 positions of the octanoyl moiety bound to the lipoyl domains of lipoate-dependent enzymes, thereby converting the octanoylated domains into lipoylated derivatives. The sequence is that of Lipoyl synthase, mitochondrial from Trypanosoma brucei gambiense (strain MHOM/CI/86/DAL972).